The sequence spans 132 residues: Small ribosomal subunit protein uS11 (132 aa).

The protein belongs to the universal ribosomal protein uS11 family. Part of the 30S ribosomal subunit. Interacts with proteins S7 and S18. Binds to IF-3.

Located on the platform of the 30S subunit, it bridges several disparate RNA helices of the 16S rRNA. Forms part of the Shine-Dalgarno cleft in the 70S ribosome. This is Small ribosomal subunit protein uS11 from Lachnoclostridium phytofermentans (strain ATCC 700394 / DSM 18823 / ISDg) (Clostridium phytofermentans).